A 515-amino-acid polypeptide reads, in one-letter code: MSSASVVEAVSVNSAIPQNRNYEYVLEVANVRKEFPGVVALDNVSLRIRPGTVHALMGENGAGKSTLMKIIAGIYQPDKGQVLLRGEPVRLEKPLDAQEAGIAMIHQELLLMNPMTVAENIWIRREPKGRFGLIDHDEMRRRTQELFDRLNINLDPEAEISELSVASRQMVEIAKAVSFNSDVLIMDEPTSAITETEVAHLFDIIRDLRAKGIGIVYITHKMNELFEIADEFSVFRDGQYIGTHLSSNVTRDDIIRMMVGREVSQMFPKEEVALGDVVLSVKNLSREGVFRNVSFDVRAGEIVGFAGLVGSGRSNVAEALFGVAPADGGAIQINGEFVQIKSPNEAIQHGMAFLTEDRKETGCFLPLTIQENIQSAVLHQNFVKKGFVAEAELAKEAVEICNKLRVKTPGMDEVIENLSGGNQQKVLIGRWLLTHPKILILDEPTRGIDVGAKAEIHSLITQLAHKGVAVVMISSELPEILGMSDRVVVMHEGRVTGILDRAEADQVKIMDLAAQ.

2 consecutive ABC transporter domains span residues 26-262 (LEVA…VGRE) and 272-511 (VALG…KIMD). Position 58–65 (58–65 (GENGAGKS)) interacts with ATP.

This sequence belongs to the ABC transporter superfamily. Carbohydrate importer 2 (CUT2) (TC 3.A.1.2) family.

Its subcellular location is the cell inner membrane. It carries out the reaction D-ribose(out) + ATP + H2O = D-ribose(in) + ADP + phosphate + H(+). It catalyses the reaction D-galactose(out) + ATP + H2O = D-galactose(in) + ADP + phosphate + H(+). Its function is as follows. Part of an ABC transporter complex involved in carbohydrate import. Could be involved in ribose, galactose and/or methyl galactoside import. Responsible for energy coupling to the transport system. The protein is Putative ribose/galactose/methyl galactoside import ATP-binding protein of Hahella chejuensis (strain KCTC 2396).